A 177-amino-acid polypeptide reads, in one-letter code: uncharacterized protein (177 aa).

The next 4 helical transmembrane spans lie at 20–42 (NLVSYAVGGILAIAGYVLILLAL), 62–84 (VVLWIIAVLIVIFAVGISFVSLS), 94–116 (AMSSFLVGVILFYILSVIGGYFI), and 136–158 (GLLYFIGTLLLIVIVGIIVIIVA).

The protein localises to the cell membrane. This is an uncharacterized protein from Methanocaldococcus jannaschii (strain ATCC 43067 / DSM 2661 / JAL-1 / JCM 10045 / NBRC 100440) (Methanococcus jannaschii).